The chain runs to 94 residues: Integration host factor subunit beta (94 aa).

This sequence belongs to the bacterial histone-like protein family. As to quaternary structure, heterodimer of an alpha and a beta chain.

In terms of biological role, this protein is one of the two subunits of integration host factor, a specific DNA-binding protein that functions in genetic recombination as well as in transcriptional and translational control. In Buchnera aphidicola subsp. Acyrthosiphon pisum (strain 5A), this protein is Integration host factor subunit beta.